Consider the following 445-residue polypeptide: uncharacterized protein (445 aa).

8 consecutive transmembrane segments (helical) span residues 16-36 (IVSL…AFLI), 52-72 (LLAS…GYLL), 98-118 (VHSL…AGGC), 168-188 (GLMF…LGIV), 219-239 (ASAL…VWLI), 243-263 (GWSV…GALG), 283-303 (LIAA…NEGS), and 366-386 (AAYP…VPLV). Residues 417–445 (AWPNGPRRPGPPGQPRRVRQGGTAITPPT) form a disordered region.

Belongs to the major facilitator superfamily.

The protein localises to the cell membrane. This is an uncharacterized protein from Mycobacterium tuberculosis (strain ATCC 25618 / H37Rv).